The primary structure comprises 422 residues: Serine protease HTRA2, mitochondrial (422 aa).

The transit peptide at 1-17 (MALRGSHRLEVIFKRCI) directs the protein to the mitochondrion. Residues 18–74 (ASPVLHSQAGNRRSSQLAIKGVDPNSNGNSGQYQQNGEHKEKGWRRLVRFFVPFSLG) constitute a propeptide that is removed on maturation. The interval 28–55 (NRRSSQLAIKGVDPNSNGNSGQYQQNGE) is disordered. Over residues 42–53 (NSNGNSGQYQQN) the composition is skewed to low complexity. Residues 64 to 82 (LVRFFVPFSLGAAVSAAII) form a helical membrane-spanning segment. 2 consecutive short sequence motifs (IAP-binding) follow at residues 75-78 (AAVS) and 94-97 (SKMT). Residues 139 to 302 (SNGSGFIIEQ…IPIDYVKVFL (164 aa)) form a serine protease region. Active-site charge relay system residues include His-157, Asp-189, and Ser-266. One can recognise a PDZ domain in the interval 325–410 (MGITMLTLTP…TLDIVILRGV (86 aa)).

It belongs to the peptidase S1C family. As to quaternary structure, interacts with th/DIAP1 (via BIR 2 domain).

The protein localises to the mitochondrion intermembrane space. It localises to the mitochondrion membrane. The enzyme catalyses Cleavage of non-polar aliphatic amino-acids at the P1 position, with a preference for Val, Ile and Met. At the P2 and P3 positions, Arg is selected most strongly with a secondary preference for other hydrophilic residues.. In terms of biological role, serine protease that shows proteolytic activity against a non-specific substrate beta-casein. Promotes or induces cell death either by direct binding to and inhibition of BIRC proteins (also called inhibitor of apoptosis proteins, IAPs), leading to an increase in caspase activity, or by a BIRC inhibition-independent, caspase-independent and serine protease activity-dependent mechanism. Can antagonize antiapoptotic activity of th/Diap1 by directly inducing the degradation of th/Diap1. The polypeptide is Serine protease HTRA2, mitochondrial (Drosophila sechellia (Fruit fly)).